The following is a 134-amino-acid chain: Small ribosomal subunit protein uS11 (134 aa).

The protein belongs to the universal ribosomal protein uS11 family. Part of the 30S ribosomal subunit. Interacts with proteins S7 and S18. Binds to IF-3.

In terms of biological role, located on the platform of the 30S subunit, it bridges several disparate RNA helices of the 16S rRNA. Forms part of the Shine-Dalgarno cleft in the 70S ribosome. The protein is Small ribosomal subunit protein uS11 of Polaromonas sp. (strain JS666 / ATCC BAA-500).